The primary structure comprises 451 residues: Uronate isomerase (451 aa).

This sequence belongs to the metallo-dependent hydrolases superfamily. Uronate isomerase family.

It carries out the reaction D-glucuronate = D-fructuronate. The catalysed reaction is aldehydo-D-galacturonate = keto-D-tagaturonate. The protein operates within carbohydrate metabolism; pentose and glucuronate interconversion. This Thermotoga sp. (strain RQ2) protein is Uronate isomerase.